The following is a 129-amino-acid chain: Small ribosomal subunit protein uS8c (129 aa).

Belongs to the universal ribosomal protein uS8 family. As to quaternary structure, part of the 30S ribosomal subunit.

The protein localises to the plastid. It is found in the chloroplast. Its function is as follows. One of the primary rRNA binding proteins, it binds directly to 16S rRNA central domain where it helps coordinate assembly of the platform of the 30S subunit. In Nephroselmis olivacea (Green alga), this protein is Small ribosomal subunit protein uS8c (rps8).